The primary structure comprises 194 residues: Potassium-transporting ATPase KdpC subunit (194 aa).

Residues 12–34 (LFLLLLTGGVYPLLTTALGQWWF) traverse the membrane as a helical segment.

It belongs to the KdpC family. The system is composed of three essential subunits: KdpA, KdpB and KdpC.

The protein resides in the cell inner membrane. Functionally, part of the high-affinity ATP-driven potassium transport (or Kdp) system, which catalyzes the hydrolysis of ATP coupled with the electrogenic transport of potassium into the cytoplasm. This subunit acts as a catalytic chaperone that increases the ATP-binding affinity of the ATP-hydrolyzing subunit KdpB by the formation of a transient KdpB/KdpC/ATP ternary complex. The polypeptide is Potassium-transporting ATPase KdpC subunit (Salmonella enteritidis PT4 (strain P125109)).